We begin with the raw amino-acid sequence, 211 residues long: N-(5'-phosphoribosyl)anthranilate isomerase (211 aa).

Belongs to the TrpF family.

The enzyme catalyses N-(5-phospho-beta-D-ribosyl)anthranilate = 1-(2-carboxyphenylamino)-1-deoxy-D-ribulose 5-phosphate. The protein operates within amino-acid biosynthesis; L-tryptophan biosynthesis; L-tryptophan from chorismate: step 3/5. This is N-(5'-phosphoribosyl)anthranilate isomerase from Zymomonas mobilis subsp. mobilis (strain ATCC 31821 / ZM4 / CP4).